The sequence spans 575 residues: MGLTSSLRFHRQNNKTFLGIFMILVLSCIPGRTNLCSNHSVSTPKELPSSNPSDIRSSLVSLDLEGYISFDDVHNVAKDFGNRYQLPPLAILHPRSVFDISSMMKHIVHLGSTSNLTVAARGHGHSLQGQALAHQGVVIKMESLRSPDIRIYKGKQPYVDVSGGEIWINILRETLKYGLSPKSWTDYLHLTVGGTLSNAGISGQAFKHGPQINNVYQLEIVTGKGEVVTCSEKRNSELFFSVLGGLGQFGIITRARISLEPAPHMVKWIRVLYSDFSAFSRDQEYLISKEKTFDYVEGFVIINRTDLLNNWRSSFSPNDSTQASRFKSDGKTLYCLEVVKYFNPEEASSMDQETGKLLSELNYIPSTLFSSEVPYIEFLDRVHIAERKLRAKGLWEVPHPWLNLLIPKSSIYQFATEVFNNILTSNNNGPILIYPVNQSKWKKHTSLITPNEDIFYLVAFLPSAVPNSSGKNDLEYLLKQNQRVMNFCAAANLNVKQYLPHYETQKEWKSHFGKRWETFAQRKQAYDPLAILAPGQRIFQKTTGKLSPIQLAKSKATGSPQRYHYASILPKPRTV.

The N-terminal stretch at methionine 1 to glycine 31 is a signal peptide. 3 N-linked (GlcNAc...) asparagine glycosylation sites follow: asparagine 14, asparagine 38, and asparagine 115. The FAD-binding PCMH-type domain occupies tyrosine 84–alanine 262. Positions 120, 122, and 124 each coordinate FAD. Histidine 125 bears the Pros-8alpha-FAD histidine mark. FAD contacts are provided by serine 126, glutamine 130, aspartate 186, threonine 191, serine 197, isoleucine 201, and isoleucine 252. 4 N-linked (GlcNAc...) asparagine glycosylation sites follow: asparagine 303, asparagine 318, asparagine 437, and asparagine 467. Residues tyrosine 498 and glutamine 536 each coordinate FAD.

The protein belongs to the oxygen-dependent FAD-linked oxidoreductase family. FAD serves as cofactor. Expressed in shoot apexes, lateral shoot meristems, growing tissues of young flowers, and weakly at the root-hypocotyl junction.

It is found in the vacuole. The catalysed reaction is N(6)-dimethylallyladenine + A + H2O = 3-methyl-2-butenal + adenine + AH2. Its function is as follows. Catalyzes the oxidation of cytokinins, a family of N(6)-substituted adenine derivatives that are plant hormones, where the substituent is an isopentenyl group. Catalyzes in vitro the oxidation of various types of cytokinin nucleotides that are known as direct products of cytokinin biosynthesis. Promotes adventitious root initiation downstream of MYC2-dependent jasmonate signaling. Cytokinin degraded by CKX1 is required for cell division in the female gametophyte by modulating the expression of cell cycle genes. The polypeptide is Cytokinin dehydrogenase 1 (CKX1) (Arabidopsis thaliana (Mouse-ear cress)).